An 845-amino-acid polypeptide reads, in one-letter code: Protein translocase subunit SecA 1 (845 aa).

ATP-binding positions include Gln-85, 103 to 107, and Asp-492; that span reads GEGKT.

The protein belongs to the SecA family. As to quaternary structure, monomer and homodimer. Part of the essential Sec protein translocation apparatus which comprises SecA, SecYEG and auxiliary proteins SecDF. Other proteins may also be involved.

The protein localises to the cell membrane. Its subcellular location is the cytoplasm. It carries out the reaction ATP + H2O + cellular proteinSide 1 = ADP + phosphate + cellular proteinSide 2.. In terms of biological role, part of the Sec protein translocase complex. Interacts with the SecYEG preprotein conducting channel. Has a central role in coupling the hydrolysis of ATP to the transfer of proteins into and across the cell membrane, serving as an ATP-driven molecular motor driving the stepwise translocation of polypeptide chains across the membrane. This Corynebacterium glutamicum (strain ATCC 13032 / DSM 20300 / JCM 1318 / BCRC 11384 / CCUG 27702 / LMG 3730 / NBRC 12168 / NCIMB 10025 / NRRL B-2784 / 534) protein is Protein translocase subunit SecA 1.